A 385-amino-acid chain; its full sequence is Urotensin-2 receptor (385 aa).

Over 1–53 (MALSLESTSFPMLAVSRSTASELPGGFNVSHNSSWTGPTDPSSLQDLVATGVI) the chain is Extracellular. N-linked (GlcNAc...) asparagine glycosylation is found at N28 and N32. The chain crosses the membrane as a helical span at residues 54–76 (GAVLSTMGVVGVVGNVYTLVVMC). Topologically, residues 77–86 (RFLRASASMY) are cytoplasmic. Residues 87 to 112 (VYVVNLALADLLYLLSIPFIVATYVT) traverse the membrane as a helical segment. Over 113-123 (KDWHFGDVGCR) the chain is Extracellular. A disulfide bridge links C122 with C198. The chain crosses the membrane as a helical span at residues 124-145 (VLFSLDFLTMHASIFTLTIMSS). Residues 146–166 (ERYAAVLRPLDTVQRSKGYRK) are Cytoplasmic-facing. A helical membrane pass occupies residues 167-185 (LLALGTWLLALLLTLPMML). The Extracellular portion of the chain corresponds to 186–208 (AIRLVRRGSKSLCLPAWGPRAHR). Residues 209–231 (TYLTLLFGTSIVGPGLVIGLLYI) form a helical membrane-spanning segment. Residues 232 to 257 (RLARAYWLSQQASFKQTRRLPNPRVL) are Cytoplasmic-facing. Residues 258 to 283 (YLILGIVLLFWACFLPFWLWQLLAQY) traverse the membrane as a helical segment. The Extracellular portion of the chain corresponds to 284-298 (HQAMPLTPETARIIN). A helical membrane pass occupies residues 299 to 320 (YLTACLTYGNSCINPFLYTLLT). At 321-385 (KNYREYLRGR…SPVPPNGAFV (65 aa)) the chain is on the cytoplasmic side.

This sequence belongs to the G-protein coupled receptor 1 family.

It is found in the cell membrane. High affinity receptor for urotensin-2 and urotensin-2B. The activity of this receptor is mediated by a G-protein that activate a phosphatidylinositol-calcium second messenger system. This Mus musculus (Mouse) protein is Urotensin-2 receptor (Uts2r).